A 473-amino-acid chain; its full sequence is 3-isopropylmalate dehydratase large subunit (473 aa).

3 residues coordinate [4Fe-4S] cluster: Cys349, Cys409, and Cys412.

Belongs to the aconitase/IPM isomerase family. LeuC type 1 subfamily. In terms of assembly, heterodimer of LeuC and LeuD. [4Fe-4S] cluster serves as cofactor.

The enzyme catalyses (2R,3S)-3-isopropylmalate = (2S)-2-isopropylmalate. The protein operates within amino-acid biosynthesis; L-leucine biosynthesis; L-leucine from 3-methyl-2-oxobutanoate: step 2/4. Functionally, catalyzes the isomerization between 2-isopropylmalate and 3-isopropylmalate, via the formation of 2-isopropylmaleate. The sequence is that of 3-isopropylmalate dehydratase large subunit from Gloeobacter violaceus (strain ATCC 29082 / PCC 7421).